The primary structure comprises 224 residues: PKHD-type hydroxylase Sbal195_0750 (224 aa).

Positions 78–176 (QFYPPLFNRY…RTAAFMWLQS (99 aa)) constitute a Fe2OG dioxygenase domain. Positions 96, 98, and 157 each coordinate Fe cation. R167 is a 2-oxoglutarate binding site.

The cofactor is Fe(2+). L-ascorbate serves as cofactor.

The protein is PKHD-type hydroxylase Sbal195_0750 of Shewanella baltica (strain OS195).